A 310-amino-acid polypeptide reads, in one-letter code: uncharacterized protein (310 aa).

Residues 1–70 (MAGNSQRRGA…ARGRTDETET (70 aa)) are disordered. Positions 49–62 (AAKRAKAQQRRPAR) are enriched in basic residues. 3 residues coordinate S-adenosyl-L-methionine: Gly-262, Val-282, and Leu-291.

Belongs to the class IV-like SAM-binding methyltransferase superfamily. RNA methyltransferase TrmH family.

This is an uncharacterized protein from Mycobacterium marinum (strain ATCC BAA-535 / M).